The chain runs to 314 residues: tRNA pseudouridine synthase B (314 aa).

Catalysis depends on Asp-41, which acts as the Nucleophile.

Belongs to the pseudouridine synthase TruB family. Type 1 subfamily.

The catalysed reaction is uridine(55) in tRNA = pseudouridine(55) in tRNA. In terms of biological role, responsible for synthesis of pseudouridine from uracil-55 in the psi GC loop of transfer RNAs. This chain is tRNA pseudouridine synthase B, found in Prochlorococcus marinus (strain NATL1A).